A 136-amino-acid polypeptide reads, in one-letter code: S-protein homolog 6 (136 aa).

The signal sequence occupies residues 1 to 17 (MFIIIFIVLISLIGCET). N-linked (GlcNAc...) asparagine glycans are attached at residues N76 and N108.

The protein belongs to the plant self-incompatibility (S1) protein family.

It is found in the secreted. The protein is S-protein homolog 6 of Arabidopsis thaliana (Mouse-ear cress).